We begin with the raw amino-acid sequence, 460 residues long: Cytochrome P450 CYP71D312 (460 aa).

Residue cysteine 398 coordinates heme.

This sequence belongs to the cytochrome P450 family. It depends on heme as a cofactor.

Its function is as follows. Probable heme-thiolate monooxygenase. The chain is Cytochrome P450 CYP71D312 from Panax ginseng (Korean ginseng).